We begin with the raw amino-acid sequence, 575 residues long: Putative diflavin flavoprotein A 4 (575 aa).

Positions 41 to 234 (QRGTTANSYL…LGARSYAPGH (194 aa)) are zinc metallo-hydrolase. The Flavodoxin-like domain maps to 263–405 (VALLYTSAYG…AGATFAQTLK (143 aa)). Residues 429-575 (VGRIIGSLCV…AVEHRKSGSH (147 aa)) form a flavodoxin-reductase-like region.

The protein in the N-terminal section; belongs to the zinc metallo-hydrolase group 3 family. This sequence in the C-terminal section; belongs to the flavodoxin reductase family. Fe cation serves as cofactor.

Its function is as follows. Mediates electron transfer from NADH to oxygen, reducing it to water. This modular protein has 3 redox cofactors, in other organisms the same activity requires 2 or 3 proteins. In Nostoc sp. (strain PCC 7120 / SAG 25.82 / UTEX 2576), this protein is Putative diflavin flavoprotein A 4 (dfa4).